A 423-amino-acid chain; its full sequence is Core protease OPG082 (423 aa).

Residues histidine 241, aspartate 248, and cysteine 328 contribute to the active site.

It belongs to the peptidase C57 family.

The protein resides in the virion. Late protein responsible for processing most or all of the viral core and membrane proteins known to undergo morphogenesis-associated proteolysis. These proteolytic events are involved in the transformation of immature virions (IV) into mature virions (MV). Probably cleaves at least the OPG129, OPG136, OPG098, and OPG144 precursors preferentially at Ala-Gly-|-Ala motifs. Also seems to process Ala-Gly-|-Ser and Ala-Gly-|-Thr motifs. This Homo sapiens (Human) protein is Core protease OPG082 (OPG083).